Reading from the N-terminus, the 220-residue chain is Phosphatidylserine decarboxylase proenzyme (220 aa).

The active-site Schiff-base intermediate with substrate; via pyruvic acid is Ser189. Position 189 is a pyruvic acid (Ser); by autocatalysis (Ser189).

It belongs to the phosphatidylserine decarboxylase family. PSD-A subfamily. As to quaternary structure, heterodimer of a large membrane-associated beta subunit and a small pyruvoyl-containing alpha subunit. Pyruvate serves as cofactor. In terms of processing, is synthesized initially as an inactive proenzyme. Formation of the active enzyme involves a self-maturation process in which the active site pyruvoyl group is generated from an internal serine residue via an autocatalytic post-translational modification. Two non-identical subunits are generated from the proenzyme in this reaction, and the pyruvate is formed at the N-terminus of the alpha chain, which is derived from the carboxyl end of the proenzyme. The post-translation cleavage follows an unusual pathway, termed non-hydrolytic serinolysis, in which the side chain hydroxyl group of the serine supplies its oxygen atom to form the C-terminus of the beta chain, while the remainder of the serine residue undergoes an oxidative deamination to produce ammonia and the pyruvoyl prosthetic group on the alpha chain.

The protein localises to the cell membrane. It carries out the reaction a 1,2-diacyl-sn-glycero-3-phospho-L-serine + H(+) = a 1,2-diacyl-sn-glycero-3-phosphoethanolamine + CO2. It functions in the pathway phospholipid metabolism; phosphatidylethanolamine biosynthesis; phosphatidylethanolamine from CDP-diacylglycerol: step 2/2. Its function is as follows. Catalyzes the formation of phosphatidylethanolamine (PtdEtn) from phosphatidylserine (PtdSer). This chain is Phosphatidylserine decarboxylase proenzyme, found in Pelobacter propionicus (strain DSM 2379 / NBRC 103807 / OttBd1).